The following is a 495-amino-acid chain: Alpha,alpha-trehalose-phosphate synthase [UDP-forming] 56 kDa subunit (495 aa).

Tyr-102 and Asp-156 together coordinate D-glucose 6-phosphate. Residues Arg-293 and Lys-298 each contribute to the UDP site. UDP-alpha-D-glucose contacts are provided by Arg-293 and Lys-298. Arg-331 contacts D-glucose 6-phosphate. Residues Ile-370 and Leu-396–Glu-400 each bind UDP. UDP-alpha-D-glucose contacts are provided by residues Ile-370 and Asp-392–Glu-400.

The protein belongs to the glycosyltransferase 20 family. In terms of assembly, the trehalose synthase complex is composed of the two catalytic subunits TPS1 and TPS2 and at least one of the two regulatory subunits TPS3 or TSL1.

The protein resides in the cytoplasm. The catalysed reaction is D-glucose 6-phosphate + UDP-alpha-D-glucose = alpha,alpha-trehalose 6-phosphate + UDP + H(+). It participates in carbohydrate biosynthesis. Its activity is regulated as follows. Activated by fructose 6-phosphate. Inorganic phosphate inhibits the synthase activity in the complex, but activates the synthase activity in the free monomeric form. Synthase catalytic subunit of the trehalose synthase complex that catalyzes the production of trehalose from glucose-6-phosphate and UDP-alpha-D-glucose in a two step process. Can function independently of the complex. This is Alpha,alpha-trehalose-phosphate synthase [UDP-forming] 56 kDa subunit from Saccharomyces cerevisiae (strain ATCC 204508 / S288c) (Baker's yeast).